The chain runs to 288 residues: Cyclic UMP-AMP synthase (288 aa).

The tract at residues 1 to 23 (MPVPESQLERWSHQGATTTAKKT) is disordered. Gln46 contacts UTP. 46–48 (QGS) serves as a coordination point for ATP. Positions 60 and 62 each coordinate Mg(2+). UTP-binding positions include Asp62 and 116–120 (RKTLK). Asp129 contacts Mg(2+). Position 166 (Asn166) interacts with UTP. Positions 194, 212, and 265 each coordinate ATP.

The protein belongs to the CD-NTase family. E01 subfamily. Mg(2+) serves as cofactor.

It catalyses the reaction UTP + ATP = 3',3'-cUAMP + 2 diphosphate. Cyclic nucleotide synthase (second messenger synthase) of a CBASS antivirus system. CBASS (cyclic oligonucleotide-based antiphage signaling system) provides immunity against bacteriophage. The CD-NTase protein synthesizes cyclic nucleotides in response to infection; these serve as specific second messenger signals. The signals activate a diverse range of effectors, leading to bacterial cell death and thus abortive phage infection. A type I-B(UU) CBASS system. Functionally, cyclic dinucleotide synthase that catalyzes the synthesis of 3'3'-cyclic UMP-AMP (cUMP-AMP) from UTP and ATP, a second messenger for cell signal transduction. In Rhodothermus marinus (strain SG0.5JP17-172), this protein is Cyclic UMP-AMP synthase.